Reading from the N-terminus, the 120-residue chain is uncharacterized protein (120 aa).

The signal sequence occupies residues 1 to 18; it reads MRSWIPLLVLFAVLAVFA. Positions 20–99 are disordered; that stretch reads AGKSSESDES…GDNRVKRDGL (80 aa).

This is an uncharacterized protein from Caenorhabditis elegans.